We begin with the raw amino-acid sequence, 76 residues long: Acyl carrier protein (76 aa).

Positions 1–76 constitute a Carrier domain; the sequence is MSVEEKVKKI…DAIDYVSNKQ (76 aa). S36 is modified (O-(pantetheine 4'-phosphoryl)serine).

The protein belongs to the acyl carrier protein (ACP) family. 4'-phosphopantetheine is transferred from CoA to a specific serine of apo-ACP by AcpS. This modification is essential for activity because fatty acids are bound in thioester linkage to the sulfhydryl of the prosthetic group.

The protein localises to the cytoplasm. The protein operates within lipid metabolism; fatty acid biosynthesis. Its function is as follows. Carrier of the growing fatty acid chain in fatty acid biosynthesis. This is Acyl carrier protein from Nitratidesulfovibrio vulgaris (strain ATCC 29579 / DSM 644 / CCUG 34227 / NCIMB 8303 / VKM B-1760 / Hildenborough) (Desulfovibrio vulgaris).